Consider the following 201-residue polypeptide: MAFELPNLPYEFDALEPYIDKETMEIHHDKHHNTYVTKLNAAIEGTDLENKSIEEIVANLDSVPSDIQTAVRNNGGGHLNHSLFWQLLTPNSEEKGTVIDKIKEEWGSLDKFKDEFAKKAAGQFGSGWAWLVVDKDGKLEIVSTPNQDNPITEGKTPILGLDVWEHAYYLKYQNKRPDYIDAFWNVVNWNKVDELYEAATK.

Fe(3+) is bound by residues H27, H81, D162, and H166. 4 residues coordinate Mn(2+): H27, H81, D162, and H166.

The protein belongs to the iron/manganese superoxide dismutase family. As to quaternary structure, homodimer. Requires Mn(2+) as cofactor. Fe(3+) is required as a cofactor.

It carries out the reaction 2 superoxide + 2 H(+) = H2O2 + O2. Destroys superoxide anion radicals which are normally produced within the cells and which are toxic to biological systems. Catalyzes the dismutation of superoxide anion radicals into O2 and H2O2 by successive reduction and oxidation of the transition metal ion at the active site. The sequence is that of Superoxide dismutase [Mn/Fe] (sodA) from Staphylococcus carnosus.